The following is a 397-amino-acid chain: Elongation factor Tu (397 aa).

The tr-type G domain maps to 10 to 206 (KPHVNIGTIG…AVDTYIPTPE (197 aa)). Positions 19-26 (GHVDHGKT) are G1. 19–26 (GHVDHGKT) contacts GTP. A Mg(2+)-binding site is contributed by Thr26. Residues 60-64 (GITIN) are G2. Residues 81–84 (DCPG) are G3. Residues 81 to 85 (DCPGH) and 136 to 139 (NKSD) each bind GTP. The G4 stretch occupies residues 136–139 (NKSD). The tract at residues 174-176 (SAL) is G5.

The protein belongs to the TRAFAC class translation factor GTPase superfamily. Classic translation factor GTPase family. EF-Tu/EF-1A subfamily. Monomer.

The protein localises to the cytoplasm. It carries out the reaction GTP + H2O = GDP + phosphate + H(+). Its function is as follows. GTP hydrolase that promotes the GTP-dependent binding of aminoacyl-tRNA to the A-site of ribosomes during protein biosynthesis. The chain is Elongation factor Tu from Clostridium kluyveri (strain ATCC 8527 / DSM 555 / NBRC 12016 / NCIMB 10680 / K1).